The following is a 338-amino-acid chain: UDP-N-acetylenolpyruvoylglucosamine reductase (338 aa).

The region spanning isoleucine 17–arginine 188 is the FAD-binding PCMH-type domain. The active site involves arginine 164. Serine 237 (proton donor) is an active-site residue. Glutamate 333 is a catalytic residue.

It belongs to the MurB family. The cofactor is FAD.

Its subcellular location is the cytoplasm. The enzyme catalyses UDP-N-acetyl-alpha-D-muramate + NADP(+) = UDP-N-acetyl-3-O-(1-carboxyvinyl)-alpha-D-glucosamine + NADPH + H(+). Its pathway is cell wall biogenesis; peptidoglycan biosynthesis. Functionally, cell wall formation. The polypeptide is UDP-N-acetylenolpyruvoylglucosamine reductase (Porphyromonas gingivalis (strain ATCC 33277 / DSM 20709 / CIP 103683 / JCM 12257 / NCTC 11834 / 2561)).